The primary structure comprises 362 residues: Guanine nucleotide-binding protein alpha-10 subunit (362 aa).

The N-myristoyl glycine moiety is linked to residue G2. Residue C4 is the site of S-palmitoyl cysteine attachment. Positions 35-362 (LEQSVLLIGP…QENLKDTGMI (328 aa)) constitute a G-alpha domain. The tract at residues 38–51 (SVLLIGPGESGKST) is G1 motif. GTP is bound by residues 43–50 (GPGESGKS), 184–190 (VRIRVPT), 209–213 (DCGGQ), 278–281 (NKID), and A335. 2 residues coordinate Mg(2+): S50 and T190. Residues 182–190 (DIVRIRVPT) form a G2 motif region. The tract at residues 205-214 (LSVIDCGGQR) is G3 motif. The tract at residues 274–281 (ILFLNKID) is G4 motif. Residues 333-337 (TCAIS) form a G5 motif region.

This sequence belongs to the G-alpha family. As to quaternary structure, g proteins are composed of 3 units; alpha, beta and gamma. The alpha chain contains the guanine nucleotide binding site.

Guanine nucleotide-binding proteins (G proteins) are involved as modulators or transducers in various transmembrane signaling systems. The sequence is that of Guanine nucleotide-binding protein alpha-10 subunit (gpa-10) from Caenorhabditis briggsae.